The following is a 189-amino-acid chain: GTPase HRas (189 aa).

10–17 is a binding site for GTP; sequence GARGVGKS. An Effector region motif is present at residues 32 to 40; that stretch reads YDPTIEDSY. Residues 57 to 61 and 116 to 119 contribute to the GTP site; these read DTAGQ and NKCD. 2 S-palmitoyl cysteine; by host lipidation sites follow: cysteine 181 and cysteine 184. Cysteine 186 bears the Cysteine methyl ester; by host mark. The S-farnesyl cysteine; by host moiety is linked to residue cysteine 186. Positions 187-189 are cleaved as a propeptide — removed in mature form; it reads VLS.

This sequence belongs to the small GTPase superfamily. Ras family.

The protein resides in the host cell membrane. The catalysed reaction is GTP + H2O = GDP + phosphate + H(+). With respect to regulation, alternates between an inactive form bound to GDP and an active form bound to GTP. Activated by a guanine nucleotide-exchange factor (GEF) and inactivated by a GTPase-activating protein (GAP). The protein is GTPase HRas (H-RAS) of Mus musculus (Mouse).